A 473-amino-acid polypeptide reads, in one-letter code: MSFTVAIVGRPNVGKSTLFNRLVGKKLALVDDTPGVTRDRRPGDARLMGLTFTIIDTAGLEEADEESLQGRMRAQTEAAIDEADLSLFVVDAKNGLTPVDTALAEMLRRRGKPVVLVANKSEARGSDSGFYDAYTLGLGEPTPISAEHGQGMLDLRDAIVEAIGKDRAYAKEDVAVTDVDIPPSENEADGEDEEPAYDETKPLRVAIVGRPNAGKSTLINRFLGEDRLLTGPEAGITRDSISVEWDWRGRTIKMFDTAGMRRKARVTEKLEKLSVADALRAIRFAETVVIVFDATIPFEKQDLQIVDLVLREGRAAVLAFNKWDMIEDRQAVLADLREKTDRLLPQARGIRAVPISGQTGWGLDKLMQSIIDTDRVWNKRISTARLNRWLETQQIQHPPPAVSGRRIKLKYMTQVKARPPAFMISCTRSDALPESYTRYLINGLRADFDMPSVPIRIHFRSPDNPFESKKKRT.

EngA-type G domains lie at 3-167 and 203-378; these read FTVA…GKDR and LRVA…RVWN. Residues 9–16, 56–60, 119–122, 209–216, 256–260, and 321–324 contribute to the GTP site; these read GRPNVGKS, DTAGL, NKSE, GRPNAGKS, DTAGM, and NKWD. The KH-like domain maps to 379 to 463; the sequence is KRISTARLNR…PIRIHFRSPD (85 aa).

The protein belongs to the TRAFAC class TrmE-Era-EngA-EngB-Septin-like GTPase superfamily. EngA (Der) GTPase family. In terms of assembly, associates with the 50S ribosomal subunit.

Its function is as follows. GTPase that plays an essential role in the late steps of ribosome biogenesis. This is GTPase Der from Rhizobium etli (strain ATCC 51251 / DSM 11541 / JCM 21823 / NBRC 15573 / CFN 42).